Here is a 21-residue protein sequence, read N- to C-terminus: Nucleoside diphosphate kinase (21 aa).

The Pros-phosphohistidine intermediate role is filled by histidine 4.

Belongs to the NDK family. In terms of assembly, homohexamer. Mg(2+) serves as cofactor.

The protein localises to the cytoplasm. It catalyses the reaction a 2'-deoxyribonucleoside 5'-diphosphate + ATP = a 2'-deoxyribonucleoside 5'-triphosphate + ADP. The catalysed reaction is a ribonucleoside 5'-diphosphate + ATP = a ribonucleoside 5'-triphosphate + ADP. Major role in the synthesis of nucleoside triphosphates other than ATP. The ATP gamma phosphate is transferred to the NDP beta phosphate via a ping-pong mechanism, using a phosphorylated active-site intermediate. The protein is Nucleoside diphosphate kinase (NDK1) of Candida albicans (Yeast).